The following is a 144-amino-acid chain: Large ribosomal subunit protein uL15 (144 aa).

Residues 1–49 (MIKLECLQDPSPRKRRTKLLGRGPSSGHGKTSSRGHKGDCSRSGYKRRF) form a disordered region.

This sequence belongs to the universal ribosomal protein uL15 family. Part of the 50S ribosomal subunit.

In terms of biological role, binds to the 23S rRNA. The protein is Large ribosomal subunit protein uL15 of Chlamydia trachomatis serovar A (strain ATCC VR-571B / DSM 19440 / HAR-13).